A 483-amino-acid polypeptide reads, in one-letter code: Probable cytosol aminopeptidase (483 aa).

Mn(2+)-binding residues include Lys-245 and Asp-250. The active site involves Lys-257. Mn(2+) contacts are provided by Asp-268, Asp-327, and Glu-329. The active site involves Arg-331.

This sequence belongs to the peptidase M17 family. Mn(2+) is required as a cofactor.

Its subcellular location is the cytoplasm. It carries out the reaction Release of an N-terminal amino acid, Xaa-|-Yaa-, in which Xaa is preferably Leu, but may be other amino acids including Pro although not Arg or Lys, and Yaa may be Pro. Amino acid amides and methyl esters are also readily hydrolyzed, but rates on arylamides are exceedingly low.. The enzyme catalyses Release of an N-terminal amino acid, preferentially leucine, but not glutamic or aspartic acids.. Its function is as follows. Presumably involved in the processing and regular turnover of intracellular proteins. Catalyzes the removal of unsubstituted N-terminal amino acids from various peptides. The polypeptide is Probable cytosol aminopeptidase (Wolinella succinogenes (strain ATCC 29543 / DSM 1740 / CCUG 13145 / JCM 31913 / LMG 7466 / NCTC 11488 / FDC 602W) (Vibrio succinogenes)).